Here is a 936-residue protein sequence, read N- to C-terminus: Isoleucine--tRNA ligase (936 aa).

The 'HIGH' region motif lies at 58-68 (PYANGRAHLGT). Glu-561 contacts L-isoleucyl-5'-AMP. A 'KMSKS' region motif is present at residues 602–606 (KMSKS). ATP is bound at residue Lys-605. Positions 899, 902, 919, and 922 each coordinate Zn(2+).

The protein belongs to the class-I aminoacyl-tRNA synthetase family. IleS type 1 subfamily. As to quaternary structure, monomer. It depends on Zn(2+) as a cofactor.

It localises to the cytoplasm. The catalysed reaction is tRNA(Ile) + L-isoleucine + ATP = L-isoleucyl-tRNA(Ile) + AMP + diphosphate. Its function is as follows. Catalyzes the attachment of isoleucine to tRNA(Ile). As IleRS can inadvertently accommodate and process structurally similar amino acids such as valine, to avoid such errors it has two additional distinct tRNA(Ile)-dependent editing activities. One activity is designated as 'pretransfer' editing and involves the hydrolysis of activated Val-AMP. The other activity is designated 'posttransfer' editing and involves deacylation of mischarged Val-tRNA(Ile). This Coxiella burnetii (strain Dugway 5J108-111) protein is Isoleucine--tRNA ligase.